Here is a 126-residue protein sequence, read N- to C-terminus: Adenosine 5'-monophosphoramidase HINT1 (126 aa).

Position 2 is an N-acetylalanine (A2). Residues 18–126 (IFGKIIRKEI…GGRQMNWPPG (109 aa)) form the HIT domain. N6-acetyllysine occurs at positions 21 and 30. Position 43–44 (43–44 (DI)) interacts with AMP. Residues S45 and S72 each carry the phosphoserine modification. AMP-binding positions include N99, 105 to 107 (GQS), and 112 to 114 (HLH). The Histidine triad motif motif lies at 110–114 (HVHLH). H112 serves as the catalytic Tele-AMP-histidine intermediate.

It belongs to the HINT family. In terms of assembly, homodimer. Interacts with CDK7. Interacts with RUVBL1 and RUVBL2 and is associated with the LEF1/TCF1-CTNNB1 complex and with a KAT5 histone acetyltransferase complex. Identified in a complex with MITF and CTNNB1. Interacts with CDC34 and RBX1, and is part of a SCF (SKP2-CUL1-F-box protein) E3 ubiquitin-protein ligase complex. Interacts with SUMO1, SUMO2 and RGS17. Interacts with the Ten-1 ICD form of TENM1. Interacts with CALM1; interaction increases in the presence of calcium ions. In terms of tissue distribution, widely expressed.

The protein localises to the cytoplasm. It localises to the nucleus. It carries out the reaction adenosine 5'-phosphoramidate + H2O = AMP + NH4(+). Exhibits adenosine 5'-monophosphoramidase activity, hydrolyzing purine nucleotide phosphoramidates with a single phosphate group such as adenosine 5'monophosphoramidate (AMP-NH2) to yield AMP and NH2. Hydrolyzes adenosine 5'monophosphomorpholidate (AMP-morpholidate) and guanosine 5'monophosphomorpholidate (GMP-morpholidate). Hydrolyzes lysyl-AMP (AMP-N-epsilon-(N-alpha-acetyl lysine methyl ester)) generated by lysine tRNA ligase. Hydrolyzes Met-AMP, His-AMP, Asp-AMP, lysyl-GMP (GMP-N-epsilon-(N-alpha-acetyl lysine methyl ester)) and AMP-N-alanine methyl ester. Can also convert adenosine 5'-O-phosphorothioate and guanosine 5'-O-phosphorothioate to the corresponding nucleoside 5'-O-phosphates with concomitant release of hydrogen sulfide. In addition, functions as a scaffolding protein that modulates transcriptional activation by the LEF1/TCF1-CTNNB1 complex and by the complex formed with MITF and CTNNB1. Modulates p53/TP53 levels and p53/TP53-mediated apoptosis. Modulates proteasomal degradation of target proteins by the SCF (SKP2-CUL1-F-box protein) E3 ubiquitin-protein ligase complex. Also exhibits SUMO-specific isopeptidase activity, deconjugating SUMO1 from RANGAP1 and RGS17. The polypeptide is Adenosine 5'-monophosphoramidase HINT1 (HINT1) (Oryctolagus cuniculus (Rabbit)).